A 183-amino-acid chain; its full sequence is Glutathione-regulated potassium-efflux system ancillary protein KefG (183 aa).

Belongs to the NAD(P)H dehydrogenase (quinone) family. KefG subfamily. Interacts with KefB.

It localises to the cell inner membrane. The enzyme catalyses a quinone + NADH + H(+) = a quinol + NAD(+). The catalysed reaction is a quinone + NADPH + H(+) = a quinol + NADP(+). Its function is as follows. Regulatory subunit of a potassium efflux system that confers protection against electrophiles. Required for full activity of KefB. This chain is Glutathione-regulated potassium-efflux system ancillary protein KefG, found in Salmonella gallinarum (strain 287/91 / NCTC 13346).